Consider the following 407-residue polypeptide: MVRNNNRRRQRTQRIVTTTTQTAPVPQQNVPKQPRRRRNRARRNRRQGRAMNMGALTRLSQPGLAFLKCAFAPPDFNTDPGKGIPDRFEGKVVTRKDVLNQSINFTANRDTFILIAPTPGVAYWVADVPAGTFPISTTTFNAVNFPGFNSMFGNAAASRSDQVSSFRYASMNVGIYPTSNLMQFAGSITVWKCPVKLSNVQFPVATTPATSALVHTLVGLDGVLAVGPDNFSESFIKGVFSQSVCNEPDFEFSDILEGIQTLPPANVTVATSGQPFNLAAGAEAVSGIVGWGNMDTIVIRVSAPTGAVNSAILKTWACLEYRPNPNAMLYQFGHDSPPCDEVALQEYRTVARSLPVAVIAAQNASMWERVKSIIKSSLAMASNVPGPIGIAASGLSGLSALFEGFGF.

A compositionally biased stretch (basic residues) spans Met-1 to Thr-12. The interval Met-1 to Ala-50 is disordered. Residues Gln-13 to Lys-32 show a composition bias toward low complexity. The segment covering Gln-33–Gly-48 has biased composition (basic residues). A disulfide bridge links Cys-69 with Cys-318. Residue Asp-75 is part of the active site. Residues Asp-161, Asp-221, Asp-249, Glu-251, and Gly-273 each coordinate Ca(2+).

This sequence belongs to the peptidase A6 family. Post-translationally, capsid protein alpha autocatalytically maturates into capsid protein beta and peptide gamma.

It is found in the virion. The catalysed reaction is Hydrolysis of an asparaginyl bond involved in the maturation of the structural protein of the virus, typically -Asn-|-Ala- or -Asn-|-Phe-.. Functionally, capsid protein alpha self-assembles to form an icosahedral procapsid with a T=3 symmetry, about 30 nm in diameter, and consisting of 60 capsid proteins trimers. In addition, 240 calcium ions are incorporated per capsid during assembly. The capsid encapsulates the two genomic RNAs. Capsid maturation occurs via autoproteolytic cleavage of capsid protein alpha generating capsid protein beta and the membrane-active peptide gamma. In terms of biological role, membrane-permeabilizing peptide produced by virus maturation, thereby creating the infectious virion. After endocytosis into the host cell, peptide gamma is probably exposed in endosomes, where it permeabilizes the endosomal membrane, facilitating translocation of viral capsid or RNA into the cytoplasm. Involved in specific recognition and packaging of viral RNA during assembly. This Heteronychus arator (African black beetle) protein is Capsid protein alpha (alpha).